Here is a 151-residue protein sequence, read N- to C-terminus: Large ribosomal subunit protein uL23m (151 aa).

Positions 120 to 143 are enriched in basic and acidic residues; that stretch reads DDKKSLEDAKKNHKKFLDKNKDRP. Positions 120 to 151 are disordered; it reads DDKKSLEDAKKNHKKFLDKNKDRPGTPGWFSI.

This sequence belongs to the universal ribosomal protein uL23 family. As to quaternary structure, component of the mitochondrial ribosome large subunit (39S) which comprises a 16S rRNA and about 50 distinct proteins.

It localises to the mitochondrion. This Anopheles gambiae (African malaria mosquito) protein is Large ribosomal subunit protein uL23m (mRpL23).